A 266-amino-acid polypeptide reads, in one-letter code: Transcription factor BIP1 (266 aa).

The disordered stretch occupies residues 1–73 (MAMYMPSTAS…DREAQRAIRA (73 aa)). Polar residues-rich tracts occupy residues 7–22 (STAS…SGTP) and 47–56 (RSVSTLTPSQ). The region spanning 54–95 (PSQLARKRANDREAQRAIRARTKEHIERLEREVEELKSKQNR) is the bZIP domain. Positions 59 to 81 (RKRANDREAQRAIRARTKEHIER) are basic motif. The span at 61–73 (RANDREAQRAIRA) shows a compositional bias: basic and acidic residues. The tract at residues 82-89 (LEREVEEL) is leucine-zipper.

The protein belongs to the bZIP family. Expressed in appressoria.

It localises to the nucleus. Transcription factor that is required for infection of plants hosts. Is not implicated in the development of appressoria or the subsequent penetration of host leaves, but is necessary for the initial establishment of the fungus within plant cells by orchestrating the expression of a unique set of early invasion-related genes within appressoria, encoding secreted effectors, enzymes, secondary metabolism-related enzymes, and signaling membrane receptors. Controls the expression of targeted genes by interacting directly with a 5'-TGACTC-3' motif present in their promoters. In Pyricularia oryzae (strain 70-15 / ATCC MYA-4617 / FGSC 8958) (Rice blast fungus), this protein is Transcription factor BIP1.